The primary structure comprises 139 residues: Small ribosomal subunit protein uS11 (139 aa).

Residues 1–33 (MPPAKKGPATSARKGQKTRRREKKNVPHGAAHI) form a disordered region. A compositionally biased stretch (basic residues) spans 14 to 23 (KGQKTRRREK).

Belongs to the universal ribosomal protein uS11 family. As to quaternary structure, part of the 30S ribosomal subunit. Interacts with proteins S7 and S18. Binds to IF-3.

In terms of biological role, located on the platform of the 30S subunit, it bridges several disparate RNA helices of the 16S rRNA. Forms part of the Shine-Dalgarno cleft in the 70S ribosome. In Mycobacterium bovis (strain ATCC BAA-935 / AF2122/97), this protein is Small ribosomal subunit protein uS11.